Here is a 279-residue protein sequence, read N- to C-terminus: MEFEDNNNNNDEEQEEDMNLHEEEEDDDAVYDSPPLSRVLPKASTESHETTGTTSTGGGGGFMVVHGGGGSRFRFRECLKNQAVNIGGHAVDGCGEFMPAGIEGTIDALKCAACGCHRNFHRKELPYFHHAPPQHQPPPPPPGFYRLPAPVSYRPPPSQAPPLQLALPPPQRERSEDPMETSSAEAGGGIRKRHRTKFTAEQKERMLALAERIGWRIQRQDDEVIQRFCQETGVPRQVLKVWLHNNKHTLGKSPSPLHHHQAPPPPPPQSSFHHEQDQP.

Over residues 1–30 (MEFEDNNNNNDEEQEEDMNLHEEEEDDDAV) the composition is skewed to acidic residues. The segment at 1–62 (MEFEDNNNNN…TTSTGGGGGF (62 aa)) is disordered. A ZF-HD dimerization-type zinc finger spans residues 75–124 (FRECLKNQAVNIGGHAVDGCGEFMPAGIEGTIDALKCAACGCHRNFHRKE). Disordered stretches follow at residues 128 to 199 (FHHA…TKFT) and 245 to 279 (NNKH…QDQP). The span at 134 to 143 (QHQPPPPPPG) shows a compositional bias: pro residues. The homeobox; atypical DNA-binding region spans 191–254 (RKRHRTKFTA…NNKHTLGKSP (64 aa)).

Homo- and heterodimer with other ZFHD proteins. Interacts with MIF1 and MIF2; these interactions prevent nuclear localization and DNA-binding to inhibit transcription regulation activity. Binds to ZHD2, ZHD3, ZHD4, ZHD5, ZHD6, ZHD7, ZHD8, ZHD9, ZHD10 and ZHD11. As to expression, mostly expressed in flowers and inflorescence.

The protein localises to the nucleus. Putative transcription factor. The sequence is that of Zinc-finger homeodomain protein 1 (ZHD1) from Arabidopsis thaliana (Mouse-ear cress).